A 140-amino-acid chain; its full sequence is L-fucose mutarotase (140 aa).

The Proton donor role is filled by histidine 22. Substrate contacts are provided by residues aspartate 30, arginine 107, and 129–131 (YGN).

Belongs to the RbsD / FucU family. FucU mutarotase subfamily. In terms of assembly, homodecamer.

It localises to the cytoplasm. The enzyme catalyses alpha-L-fucose = beta-L-fucose. It functions in the pathway carbohydrate metabolism; L-fucose metabolism. Involved in the anomeric conversion of L-fucose. This Salmonella typhimurium (strain LT2 / SGSC1412 / ATCC 700720) protein is L-fucose mutarotase.